Reading from the N-terminus, the 365-residue chain is Mannonate dehydratase 1 (365 aa).

It belongs to the mannonate dehydratase family. The cofactor is Fe(2+). It depends on Mn(2+) as a cofactor.

It catalyses the reaction D-mannonate = 2-dehydro-3-deoxy-D-gluconate + H2O. The protein operates within carbohydrate metabolism; pentose and glucuronate interconversion. Its function is as follows. Catalyzes the dehydration of D-mannonate. This chain is Mannonate dehydratase 1, found in Bacillus licheniformis (strain ATCC 14580 / DSM 13 / JCM 2505 / CCUG 7422 / NBRC 12200 / NCIMB 9375 / NCTC 10341 / NRRL NRS-1264 / Gibson 46).